Consider the following 509-residue polypeptide: Dye-decolorizing peroxidase AauDyP1 (509 aa).

Positions 1–22 (MRLSPVFVALLSGLLAADLGLA) are cleaved as a signal peptide. The propeptide occupies 23–61 (RSVAPRVADSPAAVTGTRKTSLLKNVAGLPPVPSAAQVA). D229 serves as the catalytic Proton acceptor. N-linked (GlcNAc...) asparagine glycosylation occurs at N343. Residue H365 participates in heme binding. N-linked (GlcNAc...) asparagine glycans are attached at residues N383, N410, and N476.

It belongs to the DyP-type peroxidase family. Heme b serves as cofactor.

The protein resides in the secreted. The catalysed reaction is Reactive Blue 5 + 2 H2O2 = 2,2'-disulfonyl azobenzene + 3-[(4-amino-6-chloro-1,3,5-triazin-2-yl)amino]benzenesulfonate + phthalate + 2 H2O + 2 H(+). It carries out the reaction 2 a phenolic donor + H2O2 = 2 a phenolic radical donor + 2 H2O. Its activity is regulated as follows. Inhibited by imidazole. In terms of biological role, manganese-independent peroxidase that is able to convert a large number of compounds, but its physiological substrate is not known. In addition to classic peroxidase substrates (e.g. 2,6-dimethoxyphenol), oxidizes dyes such as Reactive Blue 5 and Reactive Black 5. This chain is Dye-decolorizing peroxidase AauDyP1, found in Auricularia auricula-judae (Judas ear fungus).